A 136-amino-acid chain; its full sequence is Large ribosomal subunit protein uL16 (136 aa).

This sequence belongs to the universal ribosomal protein uL16 family. As to quaternary structure, part of the 50S ribosomal subunit.

Its function is as follows. Binds 23S rRNA and is also seen to make contacts with the A and possibly P site tRNAs. The sequence is that of Large ribosomal subunit protein uL16 from Rickettsia canadensis (strain McKiel).